A 715-amino-acid polypeptide reads, in one-letter code: Eosinophil peroxidase (715 aa).

A signal peptide spans 1-17; it reads MHLLPALAGVLATLVLA. Positions 18–139 are excised as a propeptide; it reads QPCEGTDPAS…SGCALRDQAE (122 aa). Asparagine 52 and asparagine 113 each carry an N-linked (GlcNAc...) asparagine glycan. Cysteines 141 and 152 form a disulfide. Aspartate 232 is a heme b binding site. Residue histidine 233 is the Proton acceptor of the active site. Aspartate 234 provides a ligand contact to Ca(2+). Intrachain disulfides connect cysteine 253/cysteine 263 and cysteine 257/cysteine 281. Residues threonine 306, phenylalanine 308, aspartate 310, and serine 312 each contribute to the Ca(2+) site. 2 N-linked (GlcNAc...) asparagine glycosylation sites follow: asparagine 327 and asparagine 363. Cysteine 359 and cysteine 370 form a disulfide bridge. Heme b is bound by residues glutamate 380 and histidine 474. Tyrosine 488 carries the 3'-nitrotyrosine modification. 2 disulfide bridges follow: cysteine 578/cysteine 635 and cysteine 676/cysteine 701. N-linked (GlcNAc...) asparagine glycosylation is found at asparagine 700 and asparagine 708.

This sequence belongs to the peroxidase family. XPO subfamily. Tetramer of two light chains and two heavy chains. It depends on Ca(2+) as a cofactor. Requires heme b as cofactor.

It is found in the cytoplasmic granule. The enzyme catalyses 2 a phenolic donor + H2O2 = 2 a phenolic radical donor + 2 H2O. In terms of biological role, mediates tyrosine nitration of secondary granule proteins in mature resting eosinophils. Shows significant inhibitory activity towards Mycobacterium tuberculosis H37Rv by inducing bacterial fragmentation and lysis. This is Eosinophil peroxidase (EPX) from Homo sapiens (Human).